The sequence spans 588 residues: Pre-mRNA 3'-end-processing factor FIP1 (588 aa).

Positions methionine 1–valine 10 are enriched in basic and acidic residues. Disordered regions lie at residues methionine 1–valine 81, glutamine 223–aspartate 291, and valine 334–glutamate 588. Residues methionine 1–glycine 96 are sufficient for interaction with PAPOLA. The segment at methionine 1–proline 341 is necessary for stimulating PAPOLA activity. Acidic residues-rich tracts occupy residues glycine 19–asparagine 40 and threonine 66–aspartate 80. Phosphoserine is present on residues serine 70, serine 72, and serine 74. The sufficient for interaction with CPSF4 stretch occupies residues lysine 122 to asparagine 228. The segment covering serine 259–serine 270 has biased composition (low complexity). Positions tryptophan 280–aspartate 291 are enriched in basic and acidic residues. Serine 289 carries the post-translational modification Phosphoserine. Residues lysine 340–leucine 398 are compositionally biased toward pro residues. Tyrosine 420 bears the Phosphotyrosine mark. A sufficient for interaction with CPSF1 and CSTF3 region spans residues serine 437 to glutamate 588. Positions tyrosine 448 to serine 486 are enriched in basic and acidic residues. The interval arginine 451–aspartate 484 is arg/Asp/Glu-rich domain. Position 486 is a phosphoserine (serine 486). Threonine 488 carries the phosphothreonine modification. A phosphoserine mark is found at serine 490 and serine 494. Residues aspartate 495–histidine 522 are compositionally biased toward basic and acidic residues. The segment covering lysine 536–arginine 545 has biased composition (basic residues). The residue at position 548 (serine 548) is a Phosphoserine. Positions histidine 554–arginine 564 are enriched in basic residues.

This sequence belongs to the FIP1 family. Component of the cleavage and polyadenylation specificity factor (CPSF) complex, composed of CPSF1, CPSF2, CPSF3, CPSF4 and FIP1L1. Found in a complex with CPSF1, FIP1L1 and PAPOLA. Interacts with CPSF1, CPSF4, CSTF2 and CSTF3. Interacts with AHCYL1 (when phosphorylated); the interaction is direct and associates AHCYL1 with the CPSF complex and RNA. Interacts with PAPOLA; the interaction seems to be increased by the interaction with AHCYL1. Interacts with NUDT21/CPSF5; this interaction occurs in a RNA sequence-specific manner. Interacts (preferentially via unphosphorylated form and Arg/Glu/Asp-rich domain) with CPSF6 (via Arg/Ser-rich domain); this interaction mediates, at least in part, the interaction between the CFIm and CPSF complexes and may be inhibited by CPSF6 hyper-phosphorylation. Interacts (preferentially via unphosphorylated form and Arg/Asp/Glu-rich domain) with CPSF7 (via Arg/Ser-rich domain); this interaction mediates, at least in part, the interaction between the CFIm and CPSF complexes and may be inhibited by CPSF7 hyper-phosphorylation.

Its subcellular location is the nucleus. Its function is as follows. Component of the cleavage and polyadenylation specificity factor (CPSF) complex that plays a key role in pre-mRNA 3'-end formation, recognizing the AAUAAA signal sequence and interacting with poly(A) polymerase and other factors to bring about cleavage and poly(A) addition. FIP1L1 contributes to poly(A) site recognition and stimulates poly(A) addition. Binds to U-rich RNA sequence elements surrounding the poly(A) site. May act to tether poly(A) polymerase to the CPSF complex. The sequence is that of Pre-mRNA 3'-end-processing factor FIP1 (FIP1L1) from Pongo abelii (Sumatran orangutan).